A 239-amino-acid polypeptide reads, in one-letter code: Aspartate/glutamate leucyltransferase (239 aa).

The protein belongs to the R-transferase family. Bpt subfamily.

It localises to the cytoplasm. It catalyses the reaction N-terminal L-glutamyl-[protein] + L-leucyl-tRNA(Leu) = N-terminal L-leucyl-L-glutamyl-[protein] + tRNA(Leu) + H(+). The enzyme catalyses N-terminal L-aspartyl-[protein] + L-leucyl-tRNA(Leu) = N-terminal L-leucyl-L-aspartyl-[protein] + tRNA(Leu) + H(+). Functions in the N-end rule pathway of protein degradation where it conjugates Leu from its aminoacyl-tRNA to the N-termini of proteins containing an N-terminal aspartate or glutamate. The chain is Aspartate/glutamate leucyltransferase from Alkalilimnicola ehrlichii (strain ATCC BAA-1101 / DSM 17681 / MLHE-1).